The chain runs to 369 residues: Caffeine synthase 1 (369 aa).

Tyr-24 provides a ligand contact to S-adenosyl-L-homocysteine. Residue Thr-31 coordinates caffeine. S-adenosyl-L-homocysteine contacts are provided by Cys-66, Asn-71, Asp-103, Leu-104, Ser-138, and Phe-139. Caffeine contacts are provided by Tyr-156, His-159, and Trp-160. Asn-177 contributes to the Mg(2+) binding site. Position 225 (Arg-225) interacts with caffeine. Asp-263, Phe-265, and Asn-266 together coordinate Mg(2+). Residue Phe-321 participates in caffeine binding.

The protein belongs to the methyltransferase superfamily. Type-7 methyltransferase family. The cofactor is Mg(2+).

The catalysed reaction is theobromine + S-adenosyl-L-methionine = caffeine + S-adenosyl-L-homocysteine + H(+). The enzyme catalyses 7-methylxanthine + S-adenosyl-L-methionine = theobromine + S-adenosyl-L-homocysteine + H(+). The protein operates within alkaloid biosynthesis. In terms of biological role, involved in the biosynthesis of caffeine. Catalyzes the conversion of 7-methylxanthine (7mX) to theobromine and of theobromine to caffeine. In Camellia taliensis (Wild tea), this protein is Caffeine synthase 1.